The following is a 65-amino-acid chain: uncharacterized protein (65 aa).

This is an uncharacterized protein from Bacillus subtilis (strain 168).